Consider the following 99-residue polypeptide: Integration host factor subunit alpha (99 aa).

The segment at 49 to 73 (FGNFDLRDKNQRPGRNPKTGEDIPI) is disordered.

Belongs to the bacterial histone-like protein family. Heterodimer of an alpha and a beta chain.

In terms of biological role, this protein is one of the two subunits of integration host factor, a specific DNA-binding protein that functions in genetic recombination as well as in transcriptional and translational control. This is Integration host factor subunit alpha from Shigella boydii serotype 18 (strain CDC 3083-94 / BS512).